Here is a 524-residue protein sequence, read N- to C-terminus: Zinc finger CCCH-type with G patch domain-containing protein (524 aa).

A disordered region spans residues 105 to 142 (SEESQPLGSNDETSTCSKGSEEEEEEEEEEEDNTSGMK). Over residues 106 to 122 (EESQPLGSNDETSTCSK) the composition is skewed to polar residues. Acidic residues predominate over residues 125 to 137 (EEEEEEEEEEEDN). The segment at 184 to 210 (KAMKPCPFFLDGKCLFNDNCRFSHGQV) adopts a C3H1-type zinc-finger fold. The disordered stretch occupies residues 279 to 298 (RGSDSSSSSSSDEEEDGAAE). The G-patch domain maps to 326–372 (TRGIGSKLLVRMGYEFGKGLGRNAEGRVEPIQAVVLPKGKSLDQCME). Disordered stretches follow at residues 375-402 (QRKK…GGAK) and 500-524 (GLQQ…MTEF). Positions 376–393 (RKKAGGKHKHKTSKRRPK) are enriched in basic residues.

Its subcellular location is the nucleus. Its function is as follows. Transcription repressor that specifically binds the 5'-GGAG[GA]A[GA]A-3' consensus sequence. Represses transcription by recruiting the chromatin multiprotein complex NuRD to target promoters. Negatively regulates expression of EGFR, a gene involved in cell proliferation, survival and migration. The polypeptide is Zinc finger CCCH-type with G patch domain-containing protein (zgpat) (Xenopus laevis (African clawed frog)).